We begin with the raw amino-acid sequence, 265 residues long: MLDKMILGRFVPLQSFVHRLDPRMKMVFVFIMMILIFLMNNWQTYAVGIILIFIILKASNLSFMFLFNGLKPILFLLIFTLLMHIFLTKGGATLVDYGIINIQSQGVIMGIMISLRFILIIFLTTIMTLTTNPIELTDAIESLLKPFKKLKLPVHELALMMSIALRFIPTLMDETQKVMKAQMSRGSDMTAGTLKERIKAVIPLLVPLFVSAFKRAEDLAIAMEVRGYKGDAGRTKYRKLDWHTYDTLSLLTLIPITLLILYLKN.

6 helical membrane passes run 26–46 (MVFV…QTYA), 47–67 (VGII…MFLF), 72–92 (PILF…KGGA), 107–127 (VIMG…TTIM), 152–172 (LPVH…PTLM), and 243–263 (HTYD…ILYL).

The protein belongs to the energy-coupling factor EcfT family. As to quaternary structure, forms a stable energy-coupling factor (ECF) transporter complex composed of 2 membrane-embedded substrate-binding proteins (S component), 2 ATP-binding proteins (A component) and 2 transmembrane proteins (T component). May be able to interact with more than 1 S component at a time.

The protein resides in the cell membrane. Transmembrane (T) component of an energy-coupling factor (ECF) ABC-transporter complex. Unlike classic ABC transporters this ECF transporter provides the energy necessary to transport a number of different substrates. The polypeptide is Energy-coupling factor transporter transmembrane protein EcfT (Macrococcus caseolyticus (strain JCSC5402) (Macrococcoides caseolyticum)).